Here is a 168-residue protein sequence, read N- to C-terminus: Outer-membrane lipoprotein YfiB (168 aa).

An N-terminal signal peptide occupies residues 1–25; it reads MLPQRLHPSRLLALALFSLVLGLAG. Cys26 is lipidated: N-palmitoyl cysteine. Cys26 carries the S-diacylglycerol cysteine lipid modification. In terms of domain architecture, OmpA-like spans 53 to 168; the sequence is EGWEFGMSSK…RRVAIIVPAE (116 aa).

Belongs to the outer membrane OOP (TC 1.B.6) superfamily. Homodimer. Interacts with YfiR. The YfiB-YfiR complex is a 2:2 heterotetramer.

It is found in the cell outer membrane. Both lipid anchor in the outer membrane and peptidoglycan binding are required for full activity. Once activated by certain cell stress, the dimeric YfiB transforms from a compact conformation to a stretched conformation, allowing the periplasmic domain of the membrane-anchored YfiB to penetrate the cell wall and sequester the YfiR dimer. GMP enhances the binding affinity between YfiB and YfiR. Functionally, activates the diguanylate cyclase TpbB/YfiN by sequestering YfiR at the outer membrane, which counteracts the YfiR-mediated repression of TpbB/YfiN at the inner membrane and leads to increased c-di-GMP production. May act as a sensor of envelope stress. In terms of biological role, part of the YfiB-TpbB-YfiR (or yfiBNR) system, encoding a tripartite signaling module that modulates intracellular c-di-GMP levels. The system is a key regulator of the small colony variant (SCV) phenotype, and plays an important role in biofilm formation and in vivo persistence. The c-di-GMP produced by TpbB/YfiN stimulates the production of the Pel and Psl exopolysaccharides, which promotes surface attachment, generates an SCV phenotype and confers resistance against phagocytosis. This chain is Outer-membrane lipoprotein YfiB, found in Pseudomonas aeruginosa (strain ATCC 15692 / DSM 22644 / CIP 104116 / JCM 14847 / LMG 12228 / 1C / PRS 101 / PAO1).